We begin with the raw amino-acid sequence, 464 residues long: Hydrogen cyanide synthase subunit HcnB (464 aa).

As to quaternary structure, heterotrimer of HcnA, HcnB and HcnC.

It is found in the cell membrane. It catalyses the reaction glycine + 2 A = hydrogen cyanide + 2 AH2 + CO2. With respect to regulation, oxygen is necessary for cyanogenesis. Activated by succinate, glycine methyl ester, glucose and D,L-methionine in addition to glycine. Phenazine methosulfate, methylene blue, 2,6-dichlorophenolindophenol (DCIP) and ferricyanide can replace oxygen for the reaction. Inhibited by pyrrolnitrin and acriflavine at 1 mM concentration. Functionally, a three-component membrane-bound flavoenzyme that catalyzes the formation of hydrogen cyanide, a secondary metabolite, by transfer of electrons to a cyanide-resistant branch of the aerobic respiratory chain. This Pseudomonas aeruginosa (strain ATCC 15692 / DSM 22644 / CIP 104116 / JCM 14847 / LMG 12228 / 1C / PRS 101 / PAO1) protein is Hydrogen cyanide synthase subunit HcnB.